The primary structure comprises 118 residues: Large ribosomal subunit protein uL18 (118 aa).

Positions 1–25 are disordered; the sequence is MITKPDKNKVRQKRHRRVRGKLSGT. Residues 10 to 20 show a composition bias toward basic residues; sequence VRQKRHRRVRG.

The protein belongs to the universal ribosomal protein uL18 family. Part of the 50S ribosomal subunit; part of the 5S rRNA/L5/L18/L25 subcomplex. Contacts the 5S and 23S rRNAs.

In terms of biological role, this is one of the proteins that bind and probably mediate the attachment of the 5S RNA into the large ribosomal subunit, where it forms part of the central protuberance. In Streptococcus gordonii (strain Challis / ATCC 35105 / BCRC 15272 / CH1 / DL1 / V288), this protein is Large ribosomal subunit protein uL18.